The chain runs to 313 residues: Biotin synthase (313 aa).

The Radical SAM core domain maps to 28-258; that stretch reads NFGNDIELCS…LFPQARLRLS (231 aa). Positions 46, 50, and 53 each coordinate [4Fe-4S] cluster. Residues Cys90, Cys121, Cys181, and Arg256 each contribute to the [2Fe-2S] cluster site.

It belongs to the radical SAM superfamily. Biotin synthase family. Homodimer. It depends on [4Fe-4S] cluster as a cofactor. The cofactor is [2Fe-2S] cluster.

The enzyme catalyses (4R,5S)-dethiobiotin + (sulfur carrier)-SH + 2 reduced [2Fe-2S]-[ferredoxin] + 2 S-adenosyl-L-methionine = (sulfur carrier)-H + biotin + 2 5'-deoxyadenosine + 2 L-methionine + 2 oxidized [2Fe-2S]-[ferredoxin]. It participates in cofactor biosynthesis; biotin biosynthesis; biotin from 7,8-diaminononanoate: step 2/2. Catalyzes the conversion of dethiobiotin (DTB) to biotin by the insertion of a sulfur atom into dethiobiotin via a radical-based mechanism. This chain is Biotin synthase, found in Francisella tularensis subsp. mediasiatica (strain FSC147).